A 236-amino-acid chain; its full sequence is Syntaxin-8 (236 aa).

The Cytoplasmic portion of the chain corresponds to 1–215 (MAPDPWFSTY…LVDRKSTSCG (215 aa)). Residues 42–65 (LTIRTLLKNLKVKIDLLKDLLLRA) adopt a coiled-coil conformation. Residues 145–207 (QKIIQEQDAG…RTEARRVTLV (63 aa)) form the t-SNARE coiled-coil homology domain. Ser-160 carries the post-translational modification Phosphoserine. The helical; Anchor for type IV membrane protein transmembrane segment at 216 to 232 (MIMVILLLLVAIVVVAV) threads the bilayer. At 233–236 (WPTN) the chain is on the vesicular side.

It belongs to the syntaxin family. In terms of assembly, forms a SNARE complex with STX7, VTI1B and VAMP8 which functions in the homotypic fusion of late endosomes. Part of the SNARE core complex containing STX7, VAMP8 and VTI1B. Interacts with VAMP8. Interacts with HECTD3. Interacts with TPC1. Post-translationally, ubiquitinated by HECTD3.

The protein resides in the membrane. Functionally, vesicle trafficking protein that functions in the early secretory pathway, possibly by mediating retrograde transport from cis-Golgi membranes to the ER. This Mus musculus (Mouse) protein is Syntaxin-8 (Stx8).